The chain runs to 458 residues: Argininosuccinate lyase (458 aa).

It belongs to the lyase 1 family. Argininosuccinate lyase subfamily.

The protein localises to the cytoplasm. It carries out the reaction 2-(N(omega)-L-arginino)succinate = fumarate + L-arginine. It participates in amino-acid biosynthesis; L-arginine biosynthesis; L-arginine from L-ornithine and carbamoyl phosphate: step 3/3. The polypeptide is Argininosuccinate lyase (Hydrogenobaculum sp. (strain Y04AAS1)).